Here is a 243-residue protein sequence, read N- to C-terminus: Ribonuclease 3 (243 aa).

One can recognise an RNase III domain in the interval 10–146; the sequence is VNRFRKRFDT…FIGALYLDQG (137 aa). A Mg(2+)-binding site is contributed by E59. D63 is an active-site residue. 2 residues coordinate Mg(2+): D132 and E135. E135 is an active-site residue. The region spanning 172 to 241 is the DRBM domain; that stretch reads DFKTQFQEYV…AESAYKQLKQ (70 aa). The span at 219 to 231 shows a compositional bias: basic and acidic residues; it reads GKGKTKKESEQRA. Residues 219–243 form a disordered region; it reads GKGKTKKESEQRAAESAYKQLKQIK.

Belongs to the ribonuclease III family. As to quaternary structure, homodimer. The cofactor is Mg(2+).

The protein localises to the cytoplasm. The catalysed reaction is Endonucleolytic cleavage to 5'-phosphomonoester.. Its function is as follows. Digests double-stranded RNA. Involved in the processing of primary rRNA transcript to yield the immediate precursors to the large and small rRNAs (23S and 16S). Processes some mRNAs, and tRNAs when they are encoded in the rRNA operon. Processes pre-crRNA and tracrRNA of type II CRISPR loci if present in the organism. This Staphylococcus aureus (strain USA300) protein is Ribonuclease 3.